Consider the following 360-residue polypeptide: POU domain, class 5, transcription factor 1 (360 aa).

Disordered stretches follow at residues 1–48 (MAGH…SGIG) and 86–137 (PPGG…EESQ). Positions 4-12 (HLASDFAFS) match the 9aaTAD motif. S111 carries the post-translational modification Phosphoserine; by MAPK. Residue K123 forms a Glycyl lysine isopeptide (Lys-Gly) (interchain with G-Cter in SUMO) linkage. The span at 123-137 (KLDKEKLEPNPEESQ) shows a compositional bias: basic and acidic residues. Residues 138-212 (DIKALQKDLE…LLQKWVEEAD (75 aa)) form the POU-specific domain. Positions 157 and 164 each coordinate DNA. DNA-binding regions lie at residues 180 to 186 (SQTTICR) and 193 to 196 (SFKN). Positions 230–289 (RKRKRTSIENRVRGNLESMFLQCPKPTLQQISHIAQQLGLEKDVVRVWFCNRRQKGKRSS) form a DNA-binding region, homeobox. The residue at position 235 (T235) is a Phosphothreonine. Phosphoserine is present on residues S236, S289, S290, and S355. The tract at residues 287 to 322 (RSSSDYSQREDFEAAGSPFTGGPVSSPLAPGPHFGT) is disordered.

The protein belongs to the POU transcription factor family. Class-5 subfamily. In terms of assembly, interacts with PKM. Interacts with WWP2. Interacts with UBE2I and ZSCAN10. Interacts with PCGF1. Interacts with ESRRB; recruits ESRRB near the POU5F1-SOX2 element in the NANOG proximal promoter; the interaction is DNA independent. Interacts with MAPK8 and MAPK9; the interaction allows MAPK8 and MAPK9 to phosphorylate POU5F1 on Ser-355. Interacts (when phosphorylated on Ser-355) with FBXW8. Interacts with FBXW4. Interacts with SOX2 and SOX15; binds synergistically with either SOX2 or SOX15 to DNA. Interacts with DDX56. In terms of processing, sumoylation enhances the protein stability, DNA binding and transactivation activity. Sumoylation is required for enhanced YES1 expression. Post-translationally, ubiquitinated; undergoes 'Lys-63'-linked polyubiquitination by WWP2 leading to proteasomal degradation. ERK1/2-mediated phosphorylation at Ser-111 promotes nuclear exclusion and proteasomal degradation. Phosphorylation at Thr-235 and Ser-236 decrease DNA-binding and alters ability to activate transcription. As to expression, expressed in immature oocytes.

It localises to the cytoplasm. It is found in the nucleus. Transcription factor that binds to the octamer motif (5'-ATTTGCAT-3'). Forms a trimeric complex with SOX2 or SOX15 on DNA and controls the expression of a number of genes involved in embryonic development such as YES1, FGF4, UTF1 and ZFP206. Critical for early embryogenesis and for embryonic stem cell pluripotency. This chain is POU domain, class 5, transcription factor 1 (POU5F1), found in Bos taurus (Bovine).